A 301-amino-acid chain; its full sequence is tRNA dimethylallyltransferase (301 aa).

9-16 provides a ligand contact to ATP; sequence GPTASGKS. A substrate-binding site is contributed by 11–16; that stretch reads TASGKS. Residues 34–37 form an interaction with substrate tRNA region; that stretch reads DSMQ.

The protein belongs to the IPP transferase family. In terms of assembly, monomer. Mg(2+) is required as a cofactor.

The catalysed reaction is adenosine(37) in tRNA + dimethylallyl diphosphate = N(6)-dimethylallyladenosine(37) in tRNA + diphosphate. Its function is as follows. Catalyzes the transfer of a dimethylallyl group onto the adenine at position 37 in tRNAs that read codons beginning with uridine, leading to the formation of N6-(dimethylallyl)adenosine (i(6)A). The chain is tRNA dimethylallyltransferase from Corynebacterium glutamicum (strain ATCC 13032 / DSM 20300 / JCM 1318 / BCRC 11384 / CCUG 27702 / LMG 3730 / NBRC 12168 / NCIMB 10025 / NRRL B-2784 / 534).